A 76-amino-acid chain; its full sequence is DNA-directed RNA polymerase subunit epsilon (76 aa).

It belongs to the RNA polymerase subunit epsilon family. As to quaternary structure, RNAP is composed of a core of 2 alpha, a beta and a beta' subunit. The core is associated with a delta subunit, and at least one of epsilon or omega. When a sigma factor is associated with the core the holoenzyme is formed, which can initiate transcription.

It catalyses the reaction RNA(n) + a ribonucleoside 5'-triphosphate = RNA(n+1) + diphosphate. In terms of biological role, a non-essential component of RNA polymerase (RNAP). This Streptococcus gordonii (strain Challis / ATCC 35105 / BCRC 15272 / CH1 / DL1 / V288) protein is DNA-directed RNA polymerase subunit epsilon.